A 675-amino-acid chain; its full sequence is MASGSALIFDEEMSRYKLLWTDPACEIEVPERLTVSYEALRTHGLAQRCKAVPVRQATEQEILLAHSEEYLEAVKQTPGMNVEELMAFSKKYNDVYFHQNIYHCAKLAAGATLQLVDSVMKREVRNGMALVRPPGHHSQRSAANGFCVFNNVAIAALYAKKNYNLNRILIVDWDVHHGQGIQYCFEEDPSVLYFSWHRYEHQSFWPNLPESDYSSVGKGKGSGFNINLPWNKVGMTNSDYLAAFFHVLLPVAYEFDPELVIVSAGFDSAIGDPEGEMCALPEIFAHLTHLLMPLAAGKMCVVLEGGYNLTSLGQSVCQTVHSLLGDPTPRISGLGTACDSALESIQNVRNVQSSYWSSFKHLAQSETNPKRPRLDATNGGPKESSEPASESNPKKTAQDIVWPEPLKRMPASVRTVVVPPPGVELTLPKNCQHSGDISESTAKEVQRIRDKHFHDLTDQNILRSLGNIISVLDRMMRSDEVCNGCVVVSDLSVSVQCALQHALTEPAERVLVVYVGDGELPVKTNDGKVFLVQICTKETEDKCVNRLSLCLREGESLTAGFMQALLGLILPVAYEFNPALVLGIVGETAAKTGLMTVWGHMTCLIQGLARGRTLTLLQGYDKDLLELTVSALSGASISPLGPLRALKPEDVEMMEKQRQRLQERWGLLRCTVSES.

Substrate is bound at residue Asp22. Positions 23 to 26 match the Substrate specificity motif; sequence PACE. Asp94 contributes to the substrate binding site. His137 functions as the Proton donor/acceptor in the catalytic mechanism. The Zn(2+) site is built by Asp174, His176, and Asp267. Tyr307 is a substrate binding site. The tract at residues 362 to 399 is disordered; the sequence is LAQSETNPKRPRLDATNGGPKESSEPASESNPKKTAQD.

The protein belongs to the histone deacetylase family. HD type 2 subfamily.

It localises to the cytoplasm. The protein localises to the nucleus. It catalyses the reaction N(8)-acetylspermidine + H2O = spermidine + acetate. It carries out the reaction N-acetylputrescine + H2O = putrescine + acetate. The enzyme catalyses N-acetylcadaverine + H2O = cadaverine + acetate. Polyamine deacetylase (PDAC), which acts preferentially on N(8)-acetylspermidine, and also on acetylcadaverine and acetylputrescine. Exhibits attenuated catalytic activity toward N(1),N(8)-diacetylspermidine and very low activity, if any, toward N(1)-acetylspermidine. Has a very weak lysine deacetylase, if any. The sequence is that of Polyamine deacetylase HDAC10 (hdac10) from Danio rerio (Zebrafish).